The sequence spans 191 residues: Transcriptional activator GvpE1 (191 aa).

Residues 31 to 51 (SDGASDHADQPPDEGATQRYT) are disordered. Position 140–145 (140–145 (KRKVYR)) interacts with DNA. Positions 150–181 (EGAFTRIDHMVDQLLLFSLVLKAVMTDCKARQ) are leucine-zipper.

As to quaternary structure, interacts with GvpD.

Its subcellular location is the cytoplasm. With respect to regulation, the amount of protein that accumulates is controlled by GvpD; GvpD causes a reduction in the amount of GvpE, preventing accumulation of excessive amounts of gas vesicles. Functionally, plays a regulatory role in gas vesicle synthesis, activates transcription of the gvpA operon, and probably of the gvpD operon. Gas vesicles are hollow, gas filled proteinaceous nanostructures found in several microbial planktonic microorganisms. They allow positioning of halobacteria at the optimal depth for growth in the poorly aerated, shallow brine pools of their habitat. Expression of a 9.5 kb p-vac DNA fragment containing 2 divergently transcribed regions (gvpD-gvpE-gvpF-gvpG-gvpH-gvpI-gvpJ-gvpK-gvpL-gvpM and gvpA-gvpC-gvpN-gvpO) allows H.volcanii to produce gas vesicles. A similar region restores gas vesicle production in H.halobium without the p-vac locus, but it still has the c-vac locus. The polypeptide is Transcriptional activator GvpE1 (gvpE11) (Halobacterium salinarum (strain ATCC 700922 / JCM 11081 / NRC-1) (Halobacterium halobium)).